Consider the following 1052-residue polypeptide: Focal adhesion kinase 1 (1052 aa).

The interval 1–27 (MAAAYLDPNLNHTPSSSTKTHLGTGME) is disordered. Alanine 2 carries the post-translational modification N-acetylalanine. The residue at position 5 (tyrosine 5) is a Phosphotyrosine. Polar residues predominate over residues 10–21 (LNHTPSSSTKTH). A Phosphothreonine modification is found at threonine 13. 2 positions are modified to phosphoserine: serine 29 and serine 54. The region spanning 35-355 (RVLKVFHYFE…GYCRLVNGAT (321 aa)) is the FERM domain. Lysine 152 is covalently cross-linked (Glycyl lysine isopeptide (Lys-Gly) (interchain with G-Cter in SUMO)). Tyrosine 397 and tyrosine 407 each carry phosphotyrosine. Position 397 is a phosphotyrosine; by autocatalysis (tyrosine 397). ATP-binding positions include 428-434 (IGEGQFG), lysine 454, and 500-502 (ELC). One can recognise a Protein kinase domain in the interval 431-680 (GQFGDVHQGV…ELKAQLSTIL (250 aa)). Catalysis depends on aspartate 546, which acts as the Proton acceptor. The residue at position 570 (tyrosine 570) is a Phosphotyrosine. 2 positions are modified to phosphotyrosine; by RET and SRC: tyrosine 576 and tyrosine 577. At serine 580 the chain carries Phosphoserine. The segment covering 685–697 (VQQEERMRMESRR) has biased composition (basic and acidic residues). 2 disordered regions span residues 685–734 (VQQE…PSPQ) and 837–921 (VRLS…DRSN). Positions 707–1052 (GSDEAPPKPS…LKMLGQTRPH (346 aa)) are interaction with TGFB1I1. Serine 722 is modified (phosphoserine). Residue serine 732 is modified to Phosphoserine; by CDK5. Basic and acidic residues predominate over residues 837 to 849 (VRLSRGSIDREDG). Phosphoserine is present on serine 843. Position 861 is a phosphotyrosine (tyrosine 861). Residues 869–880 (PAAPPKKPPRPG) show a composition bias toward pro residues. Residues 886-896 (SNLSSISSPAD) show a composition bias toward polar residues. Residue serine 910 is modified to Phosphoserine. The segment at 912-1052 (PPTANLDRSN…LKMLGQTRPH (141 aa)) is interaction with ARHGEF28. Phosphothreonine is present on threonine 914. A Phosphotyrosine; by SRC modification is found at tyrosine 925.

The protein belongs to the protein kinase superfamily. Tyr protein kinase family. FAK subfamily. Interacts with GIT1. Component of a complex that contains at least FER, CTTN and PTK2/FAK1. Interacts with BMX. Interacts with STEAP4. Interacts with ZFYVE21. Interacts with ESR1. Interacts with FGR, FLT4 and RET. Interacts with EPHA2 in resting cells; activation of EPHA2 recruits PTPN11, leading to dephosphorylation of PTK2/FAK1 and dissociation of the complex. Interacts with EPHA1 (kinase activity-dependent). Interacts with MISP. Interacts with PIAS1. Interacts with ARHGAP26 and SHC1. Interacts with RB1CC1; this inhibits PTK2/FAK1 activity and activation of downstream signaling pathways. Interacts with P53/TP53. Interacts with STAT1. Interacts with WASL. Interacts with ARHGEF7. Interacts with DCC. Interacts (via first Pro-rich region) with CAS family members (via SH3 domain), including BCAR1, BCAR3 and CASS4. Interacts with NEDD9 (via C-terminus). Interacts with SORBS1. Interacts with ARHGEF28. Interacts with SHB. Part of a complex composed of THSD1, PTK2/FAK1, TLN1 and VCL. Interacts with PXN and TLN1. Interacts with TGFB1I1. Interacts with PIK3R1 or PIK3R2. Interacts with SRC, GRB2 and GRB7. Interacts with LPXN (via LD motif 3). Interacts with CD36. Interacts with EMP2; regulates PTK2 activation and localization. Interacts with DSCAM. Interacts with AMBRA1. Interacts (when tyrosine-phosphorylated) with tensin TNS1; the interaction is increased by phosphorylation of TNS1. In terms of processing, phosphorylated on tyrosine residues upon activation, e.g. upon integrin signaling. Tyr-397 is the major autophosphorylation site, but other kinases can also phosphorylate this residue. Phosphorylation at Tyr-397 promotes interaction with SRC and SRC family members, leading to phosphorylation at Tyr-576, Tyr-577 and at additional tyrosine residues. FGR promotes phosphorylation at Tyr-397 and Tyr-576. FER promotes phosphorylation at Tyr-577, Tyr-861 and Tyr-925, even when cells are not adherent. Tyr-397, Tyr-576 and Ser-722 are phosphorylated only when cells are adherent. Phosphorylation at Tyr-397 is important for interaction with BMX, PIK3R1 and SHC1. Phosphorylation at Tyr-925 is important for interaction with GRB2. Dephosphorylated by PTPN11; PTPN11 is recruited to PTK2 via EPHA2 (tyrosine phosphorylated). Microtubule-induced dephosphorylation at Tyr-397 is crucial for the induction of focal adhesion disassembly; this dephosphorylation could be catalyzed by PTPN11 and regulated by ZFYVE21. Phosphorylation on tyrosine residues is enhanced by NTN1. Sumoylated; this enhances autophosphorylation.

It is found in the cell junction. Its subcellular location is the focal adhesion. The protein localises to the cell membrane. The protein resides in the cytoplasm. It localises to the perinuclear region. It is found in the cell cortex. Its subcellular location is the cytoskeleton. The protein localises to the microtubule organizing center. The protein resides in the centrosome. It localises to the nucleus. It is found in the cilium basal body. It catalyses the reaction L-tyrosyl-[protein] + ATP = O-phospho-L-tyrosyl-[protein] + ADP + H(+). With respect to regulation, subject to autoinhibition, mediated by interactions between the FERM domain and the kinase domain. Activated by autophosphorylation at Tyr-397. This promotes interaction with SRC and phosphorylation at Tyr-576 and Tyr-577 in the kinase activation loop by SRC. Phosphorylation at Tyr-397, Tyr-576 and Tyr-577 is required for maximal kinase activity. Non-receptor protein-tyrosine kinase that plays an essential role in regulating cell migration, adhesion, spreading, reorganization of the actin cytoskeleton, formation and disassembly of focal adhesions and cell protrusions, cell cycle progression, cell proliferation and apoptosis. Required for early embryonic development and placenta development. Required for embryonic angiogenesis, normal cardiomyocyte migration and proliferation, and normal heart development. Regulates axon growth and neuronal cell migration, axon branching and synapse formation; required for normal development of the nervous system. Plays a role in osteogenesis and differentiation of osteoblasts. Functions in integrin signal transduction, but also in signaling downstream of numerous growth factor receptors, G-protein coupled receptors (GPCR), EPHA2, netrin receptors and LDL receptors. Forms multisubunit signaling complexes with SRC and SRC family members upon activation; this leads to the phosphorylation of additional tyrosine residues, creating binding sites for scaffold proteins, effectors and substrates. Regulates numerous signaling pathways. Promotes activation of phosphatidylinositol 3-kinase and the AKT1 signaling cascade. Promotes activation of MAPK1/ERK2, MAPK3/ERK1 and the MAP kinase signaling cascade. Promotes localized and transient activation of guanine nucleotide exchange factors (GEFs) and GTPase-activating proteins (GAPs), and thereby modulates the activity of Rho family GTPases. Signaling via CAS family members mediates activation of RAC1. Phosphorylates NEDD9 following integrin stimulation. Recruits the ubiquitin ligase MDM2 to P53/TP53 in the nucleus, and thereby regulates P53/TP53 activity, P53/TP53 ubiquitination and proteasomal degradation. Phosphorylates SRC; this increases SRC kinase activity. Phosphorylates ACTN1, ARHGEF7, GRB7, RET and WASL. Promotes phosphorylation of PXN and STAT1; most likely PXN and STAT1 are phosphorylated by a SRC family kinase that is recruited to autophosphorylated PTK2/FAK1, rather than by PTK2/FAK1 itself. Promotes phosphorylation of BCAR1; GIT2 and SHC1; this requires both SRC and PTK2/FAK1. Promotes phosphorylation of BMX and PIK3R1. Its function is as follows. Does not contain a kinase domain and inhibits PTK2/FAK1 phosphorylation and signaling. Its enhanced expression can attenuate the nuclear accumulation of LPXN and limit its ability to enhance serum response factor (SRF)-dependent gene transcription. The polypeptide is Focal adhesion kinase 1 (Mus musculus (Mouse)).